A 516-amino-acid chain; its full sequence is Cytochrome P450 monooxygenase asR2 (516 aa).

Residues leucine 9–isoleucine 29 form a helical membrane-spanning segment. Residues asparagine 248 and asparagine 273 are each glycosylated (N-linked (GlcNAc...) asparagine). Cysteine 461 contacts heme.

Belongs to the cytochrome P450 family. Requires heme as cofactor.

It is found in the membrane. Its pathway is secondary metabolite biosynthesis; terpenoid biosynthesis. Its function is as follows. Cytochrome P450 monooxygenase; part of the gene cluster that mediates the biosynthesis of xenovulene A, an unusual meroterpenoid that has potent inhibitory effects on the human gamma-aminobutyrate A (GABAA) benzodiazepine receptor. The first step of xenovulene A biosynthesis is the biosynthesis of 3-methylorcinaldehyde performed by the non-reducing polyketide synthase aspks1. The salicylate hydroxylase asL1 then catalyzes the oxidative dearomatization of 3-methylorcinaldehyde to yield a dearomatized hydroxycyclohexadione. The 2-oxoglutarate-dependent dioxygenase asL3 further catalyzes the oxidative ring expansion to provide the first tropolone metabolite. The cytochrome P450 monooxygenase asR2 allows the synthesis of tropolone hemiacetal. In parallel, a previously unrecognised class of terpene cyclase, asR6, produces alpha-humulene from farnesylpyrophosphate (FPP). The putative Diels-Alderase asR5 probably catalyzes the formation of the tropolone-humulene skeleton by linking humulene and the polyketide moiety. Oxidative-ring contractions catalyzed by asL4 and asL6 then processively remove carbon atoms from the polyketide to yield xenovulene A. The chain is Cytochrome P450 monooxygenase asR2 from Sarocladium schorii (Acremonium strictum (strain IMI 501407)).